A 102-amino-acid chain; its full sequence is Small ribosomal subunit protein bS6 (102 aa).

This sequence belongs to the bacterial ribosomal protein bS6 family.

Binds together with bS18 to 16S ribosomal RNA. This chain is Small ribosomal subunit protein bS6, found in Deinococcus deserti (strain DSM 17065 / CIP 109153 / LMG 22923 / VCD115).